The sequence spans 432 residues: C2H2 type master regulator of conidiophore development brlA (432 aa).

Disordered stretches follow at residues 22–72 (SNEC…RTPG) and 238–260 (KQHS…ADTP). Positions 29 to 44 (TSSFSPLESPTPTPTS) are enriched in low complexity. 2 stretches are compositionally biased toward polar residues: residues 62–72 (LPNNTYERTPG) and 238–252 (KQHS…CSLG). 2 consecutive C2H2-type zinc fingers follow at residues 320–344 (FKCK…MKSH) and 350–375 (HVCW…TKTH). A disordered region spans residues 388–432 (LDENSPDYDPEFRGQLTPDGRPIYGSKLDDPIPGAGDMSLDGWDE).

The protein localises to the nucleus. In terms of biological role, brlA, abaA and wetA are pivotal regulators of conidiophore development and conidium maturation. They act individually and together to regulate their own expression and that of numerous other sporulation-specific genes. Binds promoters of target genes at brlA response elements (BREs) containing the conserved sequence 5'-(C/A)(A/G)AGGG(G/A)-3'. Controls the expression of the conidiophore-specific phenol oxidase ivoB. Controls the expression of the hydrophobin rodA. Mediates the developmental switch from the indeterminate, apical growth pattern of vegetative cells to the budding growth pattern of conidiophores. Expression of brlA leads to activation of abaA, wetA and stuA, cessation of vegetative growth, cellular vacuolization and spore formation. The polypeptide is C2H2 type master regulator of conidiophore development brlA (Emericella nidulans (strain FGSC A4 / ATCC 38163 / CBS 112.46 / NRRL 194 / M139) (Aspergillus nidulans)).